Reading from the N-terminus, the 401-residue chain is MKDKVVLAYSGGLDTSIIIPWLKENYDLDVIAACIDVGQDDDMEAVRNKAIKTGAVKVYIEDVKEEFVRDYLFSAVKAHILYEDAYLLGTSLARPLMAKRLVEIAHAEGAKYIAHGCTGKGNDQVRFEVGVASFDPKLGIIAPWRIWDIKSREDAIDYANSKGVEVPVTKEKIYSNDKNIWHVSHEGGDLEDPKNEHKSSMYFMTTPPEKAKDEVSYVELYFEQGIPKKLDGKELPPVEMMQTLNKLGGENGIGIVDMVENRLVGMKSRGVYETPGGTILYAAHAALERLTIDKNTAHYKQMISQKYGELVYDGLWFSPLKEALDAFVEVTQKNVTGSVKLKLYKGNVMVAGVDAPYALYDEDISSFGASELYDHKDAEGFIKIFSLPYKIKAMIEKEKGN.

ATP is bound at residue 8–16 (AYSGGLDTS). L-citrulline-binding residues include tyrosine 86 and serine 91. Glycine 116 is a binding site for ATP. Residues threonine 118, asparagine 122, and aspartate 123 each contribute to the L-aspartate site. Asparagine 122 is an L-citrulline binding site. L-citrulline is bound by residues arginine 126, serine 175, serine 184, glutamate 260, and tyrosine 272.

This sequence belongs to the argininosuccinate synthase family. Type 1 subfamily. As to quaternary structure, homotetramer.

It localises to the cytoplasm. The catalysed reaction is L-citrulline + L-aspartate + ATP = 2-(N(omega)-L-arginino)succinate + AMP + diphosphate + H(+). Its pathway is amino-acid biosynthesis; L-arginine biosynthesis; L-arginine from L-ornithine and carbamoyl phosphate: step 2/3. This Clostridium kluyveri (strain ATCC 8527 / DSM 555 / NBRC 12016 / NCIMB 10680 / K1) protein is Argininosuccinate synthase.